A 917-amino-acid polypeptide reads, in one-letter code: Auxin response factor 17 (917 aa).

The TF-B3 DNA-binding region spans 134 to 236; sequence FCKTLTASDT…QLLLGIRRAN (103 aa). The segment at 571-649 is disordered; sequence SVPNALSPFS…RPTAVPVPDP (79 aa). 2 stretches are compositionally biased toward low complexity: residues 576 to 594 and 604 to 620; these read LSPFSQLSSPSQSSPMTLQ and SYPDTSMSSLSPSNTST. Positions 786 to 870 constitute a PB1 domain; that stretch reads ATFVKVYKSG…SCIKILSPQE (85 aa).

Belongs to the ARF family. In terms of assembly, homodimers and heterodimers.

The protein localises to the nucleus. Functionally, auxin response factors (ARFs) are transcriptional factors that bind specifically to the DNA sequence 5'-TGTCTC-3' found in the auxin-responsive promoter elements (AuxREs). The chain is Auxin response factor 17 (ARF17) from Oryza sativa subsp. indica (Rice).